The chain runs to 320 residues: MDVALEFLDPLILDKAYAWLLPSEPNVPDPTSRWDRDNVYRQVISILVLTQLGATSLYLFFSALSYYFVFDRRLEYHPRFLPNQVRQEIKSSLSAIPFINILTLPWFLAEVRGKSMLYRSVSDYGWPWLVVSSILYMAFNDIGIYWIHRLEHHPSVYKYIHKPHHKWIVPTPWAALAFHPLDGYVQSLPYQSVSLSPVAAILRAIPLTINSVFVFICPMQRHLYMVLFAAVQIWTILIHDGDMISGHWTEKFINSPAHHTLHHMYFTVNYGQYFTWADAYFGSHRAPEPALDPLHDALKVMRAKGLVDEQGNPIKKPKGE.

The next 3 helical transmembrane spans lie at 43–63 (VISILVLTQLGATSLYLFFSA), 91–111 (SSLSAIPFINILTLPWFLAEV), and 127–147 (PWLVVSSILYMAFNDIGIYWI). The Fatty acid hydroxylase domain maps to 134–283 (ILYMAFNDIG…FTWADAYFGS (150 aa)). The Histidine box-1 signature appears at 148-152 (HRLEH). Positions 161-165 (HKPHH) match the Histidine box-2 motif. The chain crosses the membrane as a helical span at residues 224-244 (YMVLFAAVQIWTILIHDGDMI). A Histidine box-3 motif is present at residues 259-263 (HTLHH).

Belongs to the sterol desaturase family. Requires Fe cation as cofactor.

It is found in the endoplasmic reticulum membrane. Functionally, delta(7)-sterol 5(6)-desaturase; part of the third module of ergosterol biosynthesis pathway that includes the late steps of the pathway. Erg3C is a minor delta(7)-sterol 5(6)-desaturase within the ergosterol pathway, erg3B being the major one. The third module or late pathway involves the ergosterol synthesis itself through consecutive reactions that mainly occur in the endoplasmic reticulum (ER) membrane. Firstly, the squalene synthase erg9 catalyzes the condensation of 2 farnesyl pyrophosphate moieties to form squalene, which is the precursor of all steroids. Squalene synthase is crucial for balancing the incorporation of farnesyl diphosphate (FPP) into sterol and nonsterol isoprene synthesis. Secondly, squalene is converted into lanosterol by the consecutive action of the squalene epoxidase erg1 and the lanosterol synthase erg7. Then, the delta(24)-sterol C-methyltransferase erg6 methylates lanosterol at C-24 to produce eburicol. Eburicol is the substrate of the sterol 14-alpha demethylase encoded by cyp51A and cyp51B, to yield 4,4,24-trimethyl ergosta-8,14,24(28)-trienol. The C-14 reductase erg24 then reduces the C14=C15 double bond which leads to 4,4-dimethylfecosterol. A sequence of further demethylations at C-4, involving the C-4 demethylation complex containing the C-4 methylsterol oxidases erg25A or erg25B, the sterol-4-alpha-carboxylate 3-dehydrogenase erg26 and the 3-keto-steroid reductase erg27, leads to the production of fecosterol via 4-methylfecosterol. The C-8 sterol isomerase erg2 then catalyzes the reaction which results in unsaturation at C-7 in the B ring of sterols and thus converts fecosterol to episterol. The sterol-C5-desaturase erg3B then catalyzes the introduction of a C-5 double bond in the B ring to produce 5-dehydroepisterol. The 2 other sterol-C5-desaturases, erg3A and erg3C, seem to be less important in ergosterol biosynthesis. The C-22 sterol desaturase erg5 further converts 5-dehydroepisterol into ergosta-5,7,22,24(28)-tetraen-3beta-ol by forming the C-22(23) double bond in the sterol side chain. Finally, ergosta-5,7,22,24(28)-tetraen-3beta-ol is substrate of the C-24(28) sterol reductases erg4A and erg4B to produce ergosterol. Possible alternative sterol biosynthetic pathways might exist from fecosterol to ergosterol, depending on the activities of the erg3 isoforms. In Aspergillus fumigatus (strain ATCC MYA-4609 / CBS 101355 / FGSC A1100 / Af293) (Neosartorya fumigata), this protein is Delta(7)-sterol 5(6)-desaturase erg3C.